The following is a 163-amino-acid chain: Peptide methionine sulfoxide reductase MsrA (163 aa).

The active site involves Cys10.

The protein belongs to the MsrA Met sulfoxide reductase family.

The catalysed reaction is L-methionyl-[protein] + [thioredoxin]-disulfide + H2O = L-methionyl-(S)-S-oxide-[protein] + [thioredoxin]-dithiol. It carries out the reaction [thioredoxin]-disulfide + L-methionine + H2O = L-methionine (S)-S-oxide + [thioredoxin]-dithiol. Functionally, has an important function as a repair enzyme for proteins that have been inactivated by oxidation. Catalyzes the reversible oxidation-reduction of methionine sulfoxide in proteins to methionine. This is Peptide methionine sulfoxide reductase MsrA from Ruthia magnifica subsp. Calyptogena magnifica.